Consider the following 112-residue polypeptide: T cell receptor alpha variable 30 (112 aa).

An N-terminal signal peptide occupies residues Met1 to Ser21. An Ig-like domain is found at Pro24–Glu112. An N-linked (GlcNAc...) asparagine glycan is attached at Asn42. Cys43 and Cys109 are oxidised to a cystine.

As to quaternary structure, alpha-beta TR is a heterodimer composed of an alpha and beta chain; disulfide-linked. The alpha-beta TR is associated with the transmembrane signaling CD3 coreceptor proteins to form the TR-CD3 (TcR or TCR). The assembly of alpha-beta TR heterodimers with CD3 occurs in the endoplasmic reticulum where a single alpha-beta TR heterodimer associates with one CD3D-CD3E heterodimer, one CD3G-CD3E heterodimer and one CD247 homodimer forming a stable octameric structure. CD3D-CD3E and CD3G-CD3E heterodimers preferentially associate with TR alpha and TR beta chains, respectively. The association of the CD247 homodimer is the last step of TcR assembly in the endoplasmic reticulum and is required for transport to the cell surface.

Its subcellular location is the cell membrane. Functionally, v region of the variable domain of T cell receptor (TR) alpha chain that participates in the antigen recognition. Alpha-beta T cell receptors are antigen specific receptors which are essential to the immune response and are present on the cell surface of T lymphocytes. Recognize peptide-major histocompatibility (MH) (pMH) complexes that are displayed by antigen presenting cells (APC), a prerequisite for efficient T cell adaptive immunity against pathogens. Binding of alpha-beta TR to pMH complex initiates TR-CD3 clustering on the cell surface and intracellular activation of LCK that phosphorylates the ITAM motifs of CD3G, CD3D, CD3E and CD247 enabling the recruitment of ZAP70. In turn ZAP70 phosphorylates LAT, which recruits numerous signaling molecules to form the LAT signalosome. The LAT signalosome propagates signal branching to three major signaling pathways, the calcium, the mitogen-activated protein kinase (MAPK) kinase and the nuclear factor NF-kappa-B (NF-kB) pathways, leading to the mobilization of transcription factors that are critical for gene expression and essential for T cell growth and differentiation. The T cell repertoire is generated in the thymus, by V-(D)-J rearrangement. This repertoire is then shaped by intrathymic selection events to generate a peripheral T cell pool of self-MH restricted, non-autoaggressive T cells. Post-thymic interaction of alpha-beta TR with the pMH complexes shapes TR structural and functional avidity. In Homo sapiens (Human), this protein is T cell receptor alpha variable 30.